Reading from the N-terminus, the 623-residue chain is UvrABC system protein C (623 aa).

The 80-residue stretch at 12–91 folds into the GIY-YIG domain; it reads FSPGVYLYKD…IKQYKPRFNI (80 aa). Residues 201–236 form the UVR domain; it reads SDLARGLRARMEAASLEMRFEEAAGLRDLITTVEEI. The tract at residues 604–623 is disordered; the sequence is PVASVAQSEDAAPDVPDPQA.

It belongs to the UvrC family. As to quaternary structure, interacts with UvrB in an incision complex.

The protein localises to the cytoplasm. Its function is as follows. The UvrABC repair system catalyzes the recognition and processing of DNA lesions. UvrC both incises the 5' and 3' sides of the lesion. The N-terminal half is responsible for the 3' incision and the C-terminal half is responsible for the 5' incision. The chain is UvrABC system protein C from Solibacter usitatus (strain Ellin6076).